Consider the following 302-residue polypeptide: MRFKGLDLNLLVALDALMIERNLTAAARSINLSQPAMSAAVRRLRSYFRDELFTMRGREFVPTPRAEDLAPAIREALQHIRLNIIPWDKFTPDQSDRHFRVSLCDFVTVVLFQKILERLAREAPGISFDLLPLTDNPDELLRRGDVDFLISPPLFMSSAHPKIDLFQERLTCVGCSNNKQLEEALTAEEYSSMGHAVVRFGRTQQPTIEDCFLQEHGLKRRVEVVVSSFSMIPAALMGTDRIATVPLRLVGLFEDTIPLRMTAPPIALPTFTEAVQWPVLHDKDPANIWMRDIMVQEAARLP.

The 58-residue stretch at 6 to 63 (LDLNLLVALDALMIERNLTAAARSINLSQPAMSAAVRRLRSYFRDELFTMRGREFVPT) folds into the HTH lysR-type domain. Residues 23 to 42 (LTAAARSINLSQPAMSAAVR) constitute a DNA-binding region (H-T-H motif).

It belongs to the LysR transcriptional regulatory family.

Its function is as follows. NodD regulates the expression of the nodABCFE genes which encode other nodulation proteins. NodD is also a negative regulator of its own expression. Binds flavonoids as inducers. The protein is Nodulation protein D 3 (nodD3) of Rhizobium leguminosarum bv. phaseoli.